We begin with the raw amino-acid sequence, 646 residues long: Replication protein E1 (646 aa).

The short motif at 86–88 (KRK) is the Nuclear localization signal element. Ser91, Ser95, and Ser109 each carry phosphoserine; by host. Residues 108 to 117 (LSPRLHAIKL) carry the Nuclear export signal motif. Positions 138 to 166 (YGYSQVETTETQVEEEHGEPEGIEGGSGR) are disordered. The segment covering 149–159 (QVEEEHGEPEG) has biased composition (acidic residues). The DNA-binding region stretch occupies residues 186–352 (QQLSPRTQVV…QTMLEHSFAE (167 aa)). An SF3 helicase domain is found at 450 to 600 (IDIIVFLAAL…FPFDSNGNAV (151 aa)). 476 to 483 (GPPDTGKS) contacts ATP. Lys557 participates in a covalent cross-link: Glycyl lysine isopeptide (Lys-Gly) (interchain with G-Cter in SUMO).

This sequence belongs to the papillomaviridae E1 protein family. As to quaternary structure, can form hexamers. Interacts with E2 protein; this interaction increases E1 DNA binding specificity. Interacts with host DNA polymerase subunit POLA2. Interacts with host single stranded DNA-binding protein RPA1. Interacts with host TOP1; this interaction stimulates the enzymatic activity of TOP1. Phosphorylated. In terms of processing, sumoylated.

It localises to the host nucleus. It carries out the reaction Couples ATP hydrolysis with the unwinding of duplex DNA by translocating in the 3'-5' direction.. It catalyses the reaction ATP + H2O = ADP + phosphate + H(+). Functionally, ATP-dependent DNA 3'-5' helicase required for initiation of viral DNA replication. It forms a complex with the viral E2 protein. The E1-E2 complex binds to the replication origin which contains binding sites for both proteins. During the initial step, a dimer of E1 interacts with a dimer of protein E2 leading to a complex that binds the viral origin of replication with high specificity. Then, a second dimer of E1 displaces the E2 dimer in an ATP-dependent manner to form the E1 tetramer. Following this, two E1 monomers are added to each half of the site, which results in the formation of two E1 trimers on the viral ori. Subsequently, two hexamers will be created. The double hexamer acts as a bi-directional helicase machinery and unwinds the viral DNA and then recruits the host DNA polymerase to start replication. The polypeptide is Replication protein E1 (Homo sapiens (Human)).